A 59-amino-acid chain; its full sequence is Large ribosomal subunit protein uL30 (59 aa).

The protein belongs to the universal ribosomal protein uL30 family. As to quaternary structure, part of the 50S ribosomal subunit.

In Clostridium kluyveri (strain ATCC 8527 / DSM 555 / NBRC 12016 / NCIMB 10680 / K1), this protein is Large ribosomal subunit protein uL30.